The primary structure comprises 384 residues: Protein RecA (384 aa).

Residue 76–83 coordinates ATP; that stretch reads GPESSGKT. Residues 346-365 are disordered; it reads QGSAEPEKAAKPEKVEKADK. Residues 350–365 show a composition bias toward basic and acidic residues; that stretch reads EPEKAAKPEKVEKADK.

This sequence belongs to the RecA family.

Its subcellular location is the cytoplasm. Functionally, can catalyze the hydrolysis of ATP in the presence of single-stranded DNA, the ATP-dependent uptake of single-stranded DNA by duplex DNA, and the ATP-dependent hybridization of homologous single-stranded DNAs. It interacts with LexA causing its activation and leading to its autocatalytic cleavage. The polypeptide is Protein RecA (Polaromonas naphthalenivorans (strain CJ2)).